The sequence spans 75 residues: Large ribosomal subunit protein bL31 (75 aa).

The protein belongs to the bacterial ribosomal protein bL31 family. Type A subfamily. As to quaternary structure, part of the 50S ribosomal subunit.

Functionally, binds the 23S rRNA. The protein is Large ribosomal subunit protein bL31 of Zymomonas mobilis subsp. mobilis (strain ATCC 31821 / ZM4 / CP4).